The primary structure comprises 245 residues: NAD-dependent protein deacetylase (245 aa).

Residues 1–245 (MLLLDKINEL…SIGKVLETVI (245 aa)) form the Deacetylase sirtuin-type domain. Residues Ala-26, Thr-30, Phe-37, Arg-38, Gln-107, Ile-109, Asp-110, and His-125 each contribute to the NAD(+) site. Position 37 (Phe-37) interacts with nicotinamide. Ile-109 and Asp-110 together coordinate nicotinamide. His-125 serves as the catalytic Proton acceptor. The Zn(2+) site is built by Cys-133, Cys-136, Cys-155, and Cys-158. NAD(+)-binding residues include Thr-196, Ser-197, Asn-219, and Ile-237.

This sequence belongs to the sirtuin family. Class U subfamily. Zn(2+) is required as a cofactor.

Its subcellular location is the cytoplasm. The enzyme catalyses N(6)-acetyl-L-lysyl-[protein] + NAD(+) + H2O = 2''-O-acetyl-ADP-D-ribose + nicotinamide + L-lysyl-[protein]. NAD-dependent protein deacetylase which modulates the activities of several enzymes which are inactive in their acetylated form. This chain is NAD-dependent protein deacetylase, found in Clostridium acetobutylicum (strain ATCC 824 / DSM 792 / JCM 1419 / IAM 19013 / LMG 5710 / NBRC 13948 / NRRL B-527 / VKM B-1787 / 2291 / W).